Here is a 268-residue protein sequence, read N- to C-terminus: Indole-3-glycerol phosphate synthase (268 aa).

It belongs to the TrpC family.

The catalysed reaction is 1-(2-carboxyphenylamino)-1-deoxy-D-ribulose 5-phosphate + H(+) = (1S,2R)-1-C-(indol-3-yl)glycerol 3-phosphate + CO2 + H2O. The protein operates within amino-acid biosynthesis; L-tryptophan biosynthesis; L-tryptophan from chorismate: step 4/5. The chain is Indole-3-glycerol phosphate synthase from Parafrankia sp. (strain EAN1pec).